The following is a 479-amino-acid chain: Aspartyl/glutamyl-tRNA(Asn/Gln) amidotransferase subunit B (479 aa).

Belongs to the GatB/GatE family. GatB subfamily. Heterotrimer of A, B and C subunits.

The enzyme catalyses L-glutamyl-tRNA(Gln) + L-glutamine + ATP + H2O = L-glutaminyl-tRNA(Gln) + L-glutamate + ADP + phosphate + H(+). The catalysed reaction is L-aspartyl-tRNA(Asn) + L-glutamine + ATP + H2O = L-asparaginyl-tRNA(Asn) + L-glutamate + ADP + phosphate + 2 H(+). Its function is as follows. Allows the formation of correctly charged Asn-tRNA(Asn) or Gln-tRNA(Gln) through the transamidation of misacylated Asp-tRNA(Asn) or Glu-tRNA(Gln) in organisms which lack either or both of asparaginyl-tRNA or glutaminyl-tRNA synthetases. The reaction takes place in the presence of glutamine and ATP through an activated phospho-Asp-tRNA(Asn) or phospho-Glu-tRNA(Gln). This chain is Aspartyl/glutamyl-tRNA(Asn/Gln) amidotransferase subunit B, found in Streptococcus pyogenes serotype M1.